A 310-amino-acid chain; its full sequence is Protoheme IX farnesyltransferase (310 aa).

Helical transmembrane passes span 30–47, 50–70, 102–122, 126–146, 152–172, 181–201, 228–248, 251–271, and 286–306; these read VTTL…FGAA, GLPL…LVSG, LGHG…YLGL, WLTA…YTPL, ICTT…WTAI, VALF…IAWL, IVIY…LRFA, IYFL…LRMF, and ARQL…VMML.

This sequence belongs to the UbiA prenyltransferase family. Protoheme IX farnesyltransferase subfamily.

The protein resides in the cell inner membrane. It carries out the reaction heme b + (2E,6E)-farnesyl diphosphate + H2O = Fe(II)-heme o + diphosphate. Its pathway is porphyrin-containing compound metabolism; heme O biosynthesis; heme O from protoheme: step 1/1. Its function is as follows. Converts heme B (protoheme IX) to heme O by substitution of the vinyl group on carbon 2 of heme B porphyrin ring with a hydroxyethyl farnesyl side group. The protein is Protoheme IX farnesyltransferase of Koribacter versatilis (strain Ellin345).